A 609-amino-acid chain; its full sequence is Glutamine--fructose-6-phosphate aminotransferase [isomerizing] (609 aa).

Cys2 (nucleophile; for GATase activity) is an active-site residue. The region spanning 2–219 (CGIFGYLGNQ…SGEFAIVSQG (218 aa)) is the Glutamine amidotransferase type-2 domain. SIS domains are found at residues 285 to 426 (LSDV…VHGA) and 458 to 599 (WAQP…IDCP). Lys604 functions as the For Fru-6P isomerization activity in the catalytic mechanism.

Homodimer.

The protein resides in the cytoplasm. It catalyses the reaction D-fructose 6-phosphate + L-glutamine = D-glucosamine 6-phosphate + L-glutamate. Its function is as follows. Catalyzes the first step in hexosamine metabolism, converting fructose-6P into glucosamine-6P using glutamine as a nitrogen source. This is Glutamine--fructose-6-phosphate aminotransferase [isomerizing] from Chlamydia pneumoniae (Chlamydophila pneumoniae).